Here is a 250-residue protein sequence, read N- to C-terminus: U6 snRNA phosphodiesterase 1 (250 aa).

Positions 1 to 31 (MALVSYSSSEEDEGETSEPPGRRLPPLPPPT) are disordered. Residues 22–31 (RRLPPLPPPT) show a composition bias toward pro residues. Catalysis depends on histidine 105, which acts as the Proton acceptor. 105–107 (HIS) provides a ligand contact to AMP. Residues glutamine 149, tyrosine 187, and 191 to 195 (SFHVS) each bind UMP. Residues tyrosine 187 and 189–195 (EPSFHVS) each bind AMP. Histidine 193 acts as the Proton donor in catalysis.

This sequence belongs to the 2H phosphoesterase superfamily. USB1 family.

The protein localises to the nucleus. It carries out the reaction a 3'-end uridylyl-uridine-RNA = a 3'-end 2',3'-cyclophospho-uridine-RNA + uridine. The catalysed reaction is a 3'-end uridylyl-adenosine-RNA = a 3'-end 2',3'-cyclophospho-uridine-RNA + adenosine. 3'-5' RNA exonuclease that trims the 3' end of oligo(U) and oligo(A) tracts of the pre-U6 small nuclear RNA (snRNA) molecule, leading to the formation of a mature U6 snRNA 3' end-terminated with a 2',3'-cyclic phosphate. Participates in the U6 snRNA 3' end processing that prevents U6 snRNA degradation. In addition also removes uridines from the 3' end of U6atac snRNA and possibly the vault RNA VTRNA1-1. This is U6 snRNA phosphodiesterase 1 from Xenopus laevis (African clawed frog).